The sequence spans 275 residues: Formamidopyrimidine-DNA glycosylase (275 aa).

The active-site Schiff-base intermediate with DNA is Pro-2. The active-site Proton donor is Glu-3. Lys-58 (proton donor; for beta-elimination activity) is an active-site residue. Residues His-93, Arg-111, and Arg-156 each coordinate DNA. The FPG-type zinc-finger motif lies at 241–275 (FVYDRAGEPCRVCGTPIRQIVQGQRSTYFCPTCQR). Arg-265 acts as the Proton donor; for delta-elimination activity in catalysis.

Belongs to the FPG family. Monomer. Zn(2+) serves as cofactor.

It carries out the reaction Hydrolysis of DNA containing ring-opened 7-methylguanine residues, releasing 2,6-diamino-4-hydroxy-5-(N-methyl)formamidopyrimidine.. The enzyme catalyses 2'-deoxyribonucleotide-(2'-deoxyribose 5'-phosphate)-2'-deoxyribonucleotide-DNA = a 3'-end 2'-deoxyribonucleotide-(2,3-dehydro-2,3-deoxyribose 5'-phosphate)-DNA + a 5'-end 5'-phospho-2'-deoxyribonucleoside-DNA + H(+). Its function is as follows. Involved in base excision repair of DNA damaged by oxidation or by mutagenic agents. Acts as a DNA glycosylase that recognizes and removes damaged bases. Has a preference for oxidized purines, such as 7,8-dihydro-8-oxoguanine (8-oxoG). Has AP (apurinic/apyrimidinic) lyase activity and introduces nicks in the DNA strand. Cleaves the DNA backbone by beta-delta elimination to generate a single-strand break at the site of the removed base with both 3'- and 5'-phosphates. The chain is Formamidopyrimidine-DNA glycosylase from Burkholderia multivorans (strain ATCC 17616 / 249).